Here is a 210-residue protein sequence, read N- to C-terminus: MPSLLIIVLIIHVVTYLINTIGANTIDSLLWLLYLKLPNQTSQTADEQRRLKREVMQLKREMNATSSQDEFAKWAKLRRRHDKTMEEYEAKNKALGKHKSSFDLAVKSVRFFSTTGLKLFLQFWFSKTPIFELPRGWIPWQVEWVLSFPRAPLGTVSIQIWGGVCATVVSLAGDAIGVVNVYLTSKAPKQKEPATSGENSARPMAIKKEL.

Residues methionine 1–leucine 4 are Lumenal-facing. A helical transmembrane segment spans residues leucine 5–asparagine 24. Over threonine 25–arginine 110 the chain is Cytoplasmic. Positions asparagine 39–leucine 95 form a coiled coil. A helical transmembrane segment spans residues phenylalanine 111 to phenylalanine 131. At glutamate 132–threonine 155 the chain is on the lumenal side. A helical membrane pass occupies residues valine 156–alanine 172. Residues glycine 173–leucine 210 lie on the Cytoplasmic side of the membrane. The disordered stretch occupies residues lysine 189–leucine 210.

The protein belongs to the WRB/GET1 family. As to quaternary structure, interacts with GET3.

Its subcellular location is the endoplasmic reticulum membrane. Required for the post-translational delivery of tail-anchored (TA) proteins to the endoplasmic reticulum. Acts as a membrane receptor for soluble GET3, which recognizes and selectively binds the transmembrane domain of TA proteins in the cytosol. The chain is Protein GET1 from Coccidioides posadasii (strain C735) (Valley fever fungus).